The following is a 383-amino-acid chain: 8-amino-7-oxononanoate synthase (383 aa).

Arg-20 contributes to the substrate binding site. Pyridoxal 5'-phosphate is bound at residue 107-108 (GY). A substrate-binding site is contributed by His-132. Ser-178, His-206, and Thr-233 together coordinate pyridoxal 5'-phosphate. Lys-236 is modified (N6-(pyridoxal phosphate)lysine). Thr-349 contributes to the substrate binding site.

Belongs to the class-II pyridoxal-phosphate-dependent aminotransferase family. BioF subfamily. As to quaternary structure, homodimer. Pyridoxal 5'-phosphate serves as cofactor.

The catalysed reaction is 6-carboxyhexanoyl-[ACP] + L-alanine + H(+) = (8S)-8-amino-7-oxononanoate + holo-[ACP] + CO2. It participates in cofactor biosynthesis; biotin biosynthesis. Functionally, catalyzes the decarboxylative condensation of pimeloyl-[acyl-carrier protein] and L-alanine to produce 8-amino-7-oxononanoate (AON), [acyl-carrier protein], and carbon dioxide. This Chromobacterium violaceum (strain ATCC 12472 / DSM 30191 / JCM 1249 / CCUG 213 / NBRC 12614 / NCIMB 9131 / NCTC 9757 / MK) protein is 8-amino-7-oxononanoate synthase.